Consider the following 157-residue polypeptide: 6,7-dimethyl-8-ribityllumazine synthase (157 aa).

5-amino-6-(D-ribitylamino)uracil-binding positions include phenylalanine 24, 56–58 (SFE), and 79–81 (VLI). Residue 84–85 (ET) participates in (2S)-2-hydroxy-3-oxobutyl phosphate binding. Histidine 87 (proton donor) is an active-site residue. Position 112 (phenylalanine 112) interacts with 5-amino-6-(D-ribitylamino)uracil. Position 126 (arginine 126) interacts with (2S)-2-hydroxy-3-oxobutyl phosphate.

Belongs to the DMRL synthase family.

The catalysed reaction is (2S)-2-hydroxy-3-oxobutyl phosphate + 5-amino-6-(D-ribitylamino)uracil = 6,7-dimethyl-8-(1-D-ribityl)lumazine + phosphate + 2 H2O + H(+). It functions in the pathway cofactor biosynthesis; riboflavin biosynthesis; riboflavin from 2-hydroxy-3-oxobutyl phosphate and 5-amino-6-(D-ribitylamino)uracil: step 1/2. Its function is as follows. Catalyzes the formation of 6,7-dimethyl-8-ribityllumazine by condensation of 5-amino-6-(D-ribitylamino)uracil with 3,4-dihydroxy-2-butanone 4-phosphate. This is the penultimate step in the biosynthesis of riboflavin. The chain is 6,7-dimethyl-8-ribityllumazine synthase from Pyrococcus furiosus (strain ATCC 43587 / DSM 3638 / JCM 8422 / Vc1).